A 123-amino-acid polypeptide reads, in one-letter code: Small ribosomal subunit protein uS12 (123 aa).

The tract at residues 1–30 (MPTIQQLVRKGRQDKVEKNKTPALEGSPQR) is disordered. Positions 11–20 (GRQDKVEKNK) are enriched in basic and acidic residues. 3-methylthioaspartic acid is present on D89.

It belongs to the universal ribosomal protein uS12 family. As to quaternary structure, part of the 30S ribosomal subunit. Contacts proteins S8 and S17. May interact with IF1 in the 30S initiation complex.

In terms of biological role, with S4 and S5 plays an important role in translational accuracy. Its function is as follows. Interacts with and stabilizes bases of the 16S rRNA that are involved in tRNA selection in the A site and with the mRNA backbone. Located at the interface of the 30S and 50S subunits, it traverses the body of the 30S subunit contacting proteins on the other side and probably holding the rRNA structure together. The combined cluster of proteins S8, S12 and S17 appears to hold together the shoulder and platform of the 30S subunit. This is Small ribosomal subunit protein uS12 (rpsL) from Streptomyces avermitilis (strain ATCC 31267 / DSM 46492 / JCM 5070 / NBRC 14893 / NCIMB 12804 / NRRL 8165 / MA-4680).